The sequence spans 130 residues: Neelaredoxin (130 aa).

Fe cation is bound by residues Glu-15, His-17, His-45, His-51, Cys-115, and His-118.

The protein belongs to the desulfoferrodoxin family. In terms of assembly, monomer. Fe cation is required as a cofactor.

The enzyme catalyses 2 superoxide + 2 H(+) = H2O2 + O2. Functionally, non-heme iron protein. The sequence is that of Neelaredoxin (nlr) from Megalodesulfovibrio gigas (Desulfovibrio gigas).